Here is a 158-residue protein sequence, read N- to C-terminus: Small ribosomal subunit protein uS7 (158 aa).

It belongs to the universal ribosomal protein uS7 family. As to quaternary structure, part of the 30S ribosomal subunit. Contacts proteins S9 and S11.

Its function is as follows. One of the primary rRNA binding proteins, it binds directly to 16S rRNA where it nucleates assembly of the head domain of the 30S subunit. Is located at the subunit interface close to the decoding center, probably blocks exit of the E-site tRNA. The chain is Small ribosomal subunit protein uS7 from Flavobacterium psychrophilum (strain ATCC 49511 / DSM 21280 / CIP 103535 / JIP02/86).